Consider the following 560-residue polypeptide: E3 SUMO-protein ligase CBX4 (560 aa).

An involved in interaction with H3C15 and H3C1 region spans residues 1 to 75; that stretch reads MELPAVGEHV…LMGYRKRGPK (75 aa). The interval 1 to 539 is interaction with BMI1; sequence MELPAVGEHV…LSEFKPFFGN (539 aa). Positions 11-69 constitute a Chromo domain; sequence FAVESIEKKRIRKGRVEYLVKWRGWSPKYNTWEPEENILDPRLLIAFQNRERQEQLMGY. Glycyl lysine isopeptide (Lys-Gly) (interchain with G-Cter in SUMO2) cross-links involve residues lysine 77, lysine 106, lysine 114, and lysine 125. Residues 92-152 are disordered; sequence VLTGLQDSST…PPGKSGKYYY (61 aa). Residue lysine 149 is modified to N6-acetyllysine; alternate. Residue lysine 149 forms a Glycyl lysine isopeptide (Lys-Gly) (interchain with G-Cter in SUMO2); alternate linkage. Glycyl lysine isopeptide (Lys-Gly) (interchain with G-Cter in SUMO2) cross-links involve residues lysine 157, lysine 167, and lysine 178. At serine 182 the chain carries Phosphoserine. Glycyl lysine isopeptide (Lys-Gly) (interchain with G-Cter in SUMO2) cross-links involve residues lysine 191, lysine 205, lysine 212, lysine 223, lysine 249, lysine 268, lysine 278, and lysine 280. The disordered stretch occupies residues 217-243; sequence AAGAPGKGSEKGPPNGMMPAPKEAVTG. Composition is skewed to basic and acidic residues over residues 281 to 291 and 298 to 331; these read SGEVAEGEARS and AADERHPPADRTFKKAAGAEEKKVEAPPKRREEE. The tract at residues 281–404 is disordered; the sequence is SGEVAEGEAR…HHHHHHAVGL (124 aa). Glycyl lysine isopeptide (Lys-Gly) (interchain with G-Cter in SUMO2) cross-links involve residues lysine 320, lysine 352, and lysine 365. A compositionally biased stretch (basic residues) spans 380–401; the sequence is PSHHPHPHPHHHHHHHHHHHHA. Serine 467 carries the phosphoserine modification. Lysine 494 participates in a covalent cross-link: Glycyl lysine isopeptide (Lys-Gly) (interchain with G-Cter in SUMO2); alternate. Lysine 494 is covalently cross-linked (Glycyl lysine isopeptide (Lys-Gly) (interchain with G-Cter in SUMO); alternate). Threonine 497 bears the Phosphothreonine; by HIPK2 mark. The segment covering 509–521 has biased composition (low complexity); sequence AAPTTTAEKPPAE. Positions 509-528 are disordered; that stretch reads AAPTTTAEKPPAEAQDEPAE. The involved in interaction with H3C15 and RNF2 stretch occupies residues 531–556; sequence SEFKPFFGNIIITDVTANCLTVTFKE. The interaction with RNF2 stretch occupies residues 540–560; sequence IIITDVTANCLTVTFKEYVTV.

Interacts with histone H3-K9Me3. Interacts with CHTOP. Component of a PRC1-like complex. The composition of the PRC1 complex differs between the PRC1 complex in pluripotent embryonic stem cells containing RNF2, CBX7 and PCGF2, and the PRC1 complex in differentiating cells containing RNF2, CBX2, CBX4 and BMI1. Self-associates. Interacts with SUV39H1 and HIPK2. Interacts with CSNK2B. May interact with H3C15, H3C1 and RNF2. Interacts with SUMO1P1/SUMO5. Interacts with PRDM1/Blimp-1. In terms of processing, ubiquitinated. Ubiquitination regulates the function of the Polycomb group (PcG) multiprotein PRC1-like complex. Deubiquitinated by USP26. Post-translationally, phosphorylated on Thr-497 by HIPK2 upon DNA damage. This phosphorylation stimulates E3 SUMO-protein ligase activity and promotes sumoylation on Lys-494, as well as sumoylation of other target proteins, such as HNRNPK. Ubiquitous.

The protein localises to the nucleus. It is found in the nucleus speckle. The protein operates within protein modification; protein sumoylation. E3 SUMO-protein ligase that catalyzes sumoylation of target proteins by promoting the transfer of SUMO from the E2 enzyme to the substrate. Involved in the sumoylation of HNRNPK, a p53/TP53 transcriptional coactivator, hence indirectly regulates p53/TP53 transcriptional activation resulting in p21/CDKN1A expression. Monosumoylates ZNF131. In terms of biological role, component of a Polycomb group (PcG) multiprotein PRC1-like complex, a complex class required to maintain the transcriptionally repressive state of many genes, including Hox genes, throughout development. PcG PRC1 complex acts via chromatin remodeling and modification of histones; it mediates monoubiquitination of histone H2A 'Lys-119', rendering chromatin heritably changed in its expressibility. Binds to histone H3 trimethylated at 'Lys-9' (H3K9me3). Plays a role in the lineage differentiation of the germ layers in embryonic development. This Homo sapiens (Human) protein is E3 SUMO-protein ligase CBX4 (CBX4).